The following is a 457-amino-acid chain: Bifunctional protein GlmU (457 aa).

The segment at 1–230 (MPLSLPLHIV…AQEVEGVNDL (230 aa)) is pyrophosphorylase. Residues 12 to 15 (LAAG), Lys26, Gln78, 83 to 84 (GT), 105 to 107 (YGD), Gly140, Glu155, Asn170, and Asn228 each bind UDP-N-acetyl-alpha-D-glucosamine. Asp107 provides a ligand contact to Mg(2+). Residue Asn228 coordinates Mg(2+). The tract at residues 231 to 251 (WQLTQLERAWQIRAARALCLQ) is linker. An N-acetyltransferase region spans residues 252-457 (GARVADPARL…DGWQRPKKKT (206 aa)). 2 residues coordinate UDP-N-acetyl-alpha-D-glucosamine: Arg334 and Lys352. Catalysis depends on His364, which acts as the Proton acceptor. 2 residues coordinate UDP-N-acetyl-alpha-D-glucosamine: Tyr367 and Asn378. Acetyl-CoA is bound by residues Ala381, 387-388 (NY), Ser406, Ala424, and Arg441.

This sequence in the N-terminal section; belongs to the N-acetylglucosamine-1-phosphate uridyltransferase family. It in the C-terminal section; belongs to the transferase hexapeptide repeat family. In terms of assembly, homotrimer. Mg(2+) serves as cofactor.

It is found in the cytoplasm. The enzyme catalyses alpha-D-glucosamine 1-phosphate + acetyl-CoA = N-acetyl-alpha-D-glucosamine 1-phosphate + CoA + H(+). It catalyses the reaction N-acetyl-alpha-D-glucosamine 1-phosphate + UTP + H(+) = UDP-N-acetyl-alpha-D-glucosamine + diphosphate. Its pathway is nucleotide-sugar biosynthesis; UDP-N-acetyl-alpha-D-glucosamine biosynthesis; N-acetyl-alpha-D-glucosamine 1-phosphate from alpha-D-glucosamine 6-phosphate (route II): step 2/2. It functions in the pathway nucleotide-sugar biosynthesis; UDP-N-acetyl-alpha-D-glucosamine biosynthesis; UDP-N-acetyl-alpha-D-glucosamine from N-acetyl-alpha-D-glucosamine 1-phosphate: step 1/1. The protein operates within bacterial outer membrane biogenesis; LPS lipid A biosynthesis. Functionally, catalyzes the last two sequential reactions in the de novo biosynthetic pathway for UDP-N-acetylglucosamine (UDP-GlcNAc). The C-terminal domain catalyzes the transfer of acetyl group from acetyl coenzyme A to glucosamine-1-phosphate (GlcN-1-P) to produce N-acetylglucosamine-1-phosphate (GlcNAc-1-P), which is converted into UDP-GlcNAc by the transfer of uridine 5-monophosphate (from uridine 5-triphosphate), a reaction catalyzed by the N-terminal domain. The sequence is that of Bifunctional protein GlmU from Xylella fastidiosa (strain M23).